The sequence spans 424 residues: L-glutamine:2-deoxy-scyllo-inosose aminotransferase (424 aa).

Lys-202 is subject to N6-(pyridoxal phosphate)lysine.

This sequence belongs to the DegT/DnrJ/EryC1 family. L-glutamine:2-deoxy-scyllo-inosose/scyllo-inosose aminotransferase subfamily. Pyridoxal 5'-phosphate serves as cofactor.

The catalysed reaction is 2-deoxy-L-scyllo-inosose + L-glutamine = 2-deoxy-scyllo-inosamine + 2-oxoglutaramate. It carries out the reaction 3-amino-2,3-dideoxy-scyllo-inosose + L-glutamine = 2-deoxystreptamine + 2-oxoglutaramate. It participates in metabolic intermediate biosynthesis; 2-deoxystreptamine biosynthesis; 2-deoxystreptamine from D-glucose 6-phosphate: step 2/4. It functions in the pathway metabolic intermediate biosynthesis; 2-deoxystreptamine biosynthesis; 2-deoxystreptamine from D-glucose 6-phosphate: step 4/4. Its pathway is antibiotic biosynthesis; paromomycin biosynthesis. Catalyzes the PLP-dependent transamination of 2-deoxy-scyllo-inosose (2-DOI) to form 2-deoxy-scyllo-inosamine (2-DOIA) using L-glutamine as the amino donor. Also catalyzes the transamination of 3-amino-2,3-dideoxy-scyllo-inosose (keto-2-DOIA) into 2-deoxystreptamine (2-DOS). In Streptomyces paromomycinus (Streptomyces rimosus subsp. paromomycinus), this protein is L-glutamine:2-deoxy-scyllo-inosose aminotransferase (parS).